The primary structure comprises 209 residues: Mitochondrial import inner membrane translocase subunit Tim23 (209 aa).

The next 3 membrane-spanning stretches (helical) occupy residues 73-93 (FELAFFTIGGCCMTGAAFGAL), 125-145 (ALWANTLGSLALLYSAFGVII), and 181-197 (GLAGLTLTSVYALYNNW).

Belongs to the Tim17/Tim22/Tim23 family. As to quaternary structure, component of the TIM23 complex at least composed of TIMM23, TIMM17 (TIMM17A or TIMM17B) and TIMM50; within this complex, directly interacts with TIMM50. The complex interacts with the TIMM44 component of the PAM complex and with DNAJC15. Upon mitochondrial depolarization, interacts with PINK1; the interaction is required for PINK1 accumulation at the outer mitochondrial membrane, kinase activation by autophosphorylation and PRKN recruitement to mitochondria.

The protein localises to the mitochondrion inner membrane. Its function is as follows. Essential component of the TIM23 complex, a complex that mediates the translocation of transit peptide-containing proteins across the mitochondrial inner membrane. Has a role in the activation of stress-induced mitophagy by protecting PINK1 from OMA1-mediated degradation and facilitating its accumulation at the outer mitochondrial membrane in response to depolarization. The protein is Mitochondrial import inner membrane translocase subunit Tim23 (Timm23) of Rattus norvegicus (Rat).